Consider the following 88-residue polypeptide: Small ribosomal subunit protein bS20 (88 aa).

The segment at 1–27 (MANSKSAKKRALQSEKRRQHNASRRSM) is disordered.

Belongs to the bacterial ribosomal protein bS20 family.

Its function is as follows. Binds directly to 16S ribosomal RNA. The sequence is that of Small ribosomal subunit protein bS20 from Shewanella woodyi (strain ATCC 51908 / MS32).